We begin with the raw amino-acid sequence, 58 residues long: Small ribosomal subunit protein eS30 (58 aa).

A disordered region spans residues 1–58 (MGKVHGSLARAGKVKNQTPKVPKLDKKKRLTGRAKKRQLYNRRFSDNGGRKKGPNSKA). Residues 25 to 40 (DKKKRLTGRAKKRQLY) show a composition bias toward basic residues.

This sequence belongs to the eukaryotic ribosomal protein eS30 family. In terms of assembly, component of the small ribosomal subunit. Mature ribosomes consist of a small (40S) and a large (60S) subunit. The 40S subunit contains about 32 different proteins and 1 molecule of RNA (18S). The 60S subunit contains about 42 different proteins and 3 molecules of RNA (28S, 5.8S and 5S).

It localises to the cytoplasm. In terms of biological role, component of the ribosome, a large ribonucleoprotein complex responsible for the synthesis of proteins in the cell. The small ribosomal subunit (SSU) binds messenger RNAs (mRNAs) and translates the encoded message by selecting cognate aminoacyl-transfer RNA (tRNA) molecules. The large subunit (LSU) contains the ribosomal catalytic site termed the peptidyl transferase center (PTC), which catalyzes the formation of peptide bonds, thereby polymerizing the amino acids delivered by tRNAs into a polypeptide chain. The nascent polypeptides leave the ribosome through a tunnel in the LSU and interact with protein factors that function in enzymatic processing, targeting, and the membrane insertion of nascent chains at the exit of the ribosomal tunnel. This Plasmodium falciparum (isolate 3D7) protein is Small ribosomal subunit protein eS30.